Reading from the N-terminus, the 469-residue chain is Adenosylhomocysteinase (469 aa).

Positions 63, 139, and 164 each coordinate substrate. 165-167 contacts NAD(+); the sequence is TTT. Residues K194 and D198 each contribute to the substrate site. Residues N199, 228-233, E251, N300, 321-323, and N375 each bind NAD(+); these read GYGDVG and IGH.

This sequence belongs to the adenosylhomocysteinase family. It depends on NAD(+) as a cofactor.

It localises to the cytoplasm. The enzyme catalyses S-adenosyl-L-homocysteine + H2O = L-homocysteine + adenosine. Its pathway is amino-acid biosynthesis; L-homocysteine biosynthesis; L-homocysteine from S-adenosyl-L-homocysteine: step 1/1. May play a key role in the regulation of the intracellular concentration of adenosylhomocysteine. The protein is Adenosylhomocysteinase of Pseudomonas fluorescens (strain Pf0-1).